Consider the following 459-residue polypeptide: Pentatricopeptide repeat-containing protein At5g18390, mitochondrial (459 aa).

Residues 1-7 (MLLLRRY) constitute a mitochondrion transit peptide. PPR repeat units lie at residues 110–144 (TSME…SLDI), 145–175 (SGET…VPKT), 181–215 (TVDV…GLKP), 216–250 (DKRT…GFNP), 251–285 (PARG…GFVP), 286–320 (DIQT…GLCV), 321–355 (DIDT…GHKP), 356–390 (FPSL…AHPP), and 391–425 (NRPV…GLVP).

It belongs to the PPR family. P subfamily.

It is found in the mitochondrion. This Arabidopsis thaliana (Mouse-ear cress) protein is Pentatricopeptide repeat-containing protein At5g18390, mitochondrial.